A 362-amino-acid chain; its full sequence is Peptide chain release factor 1 (362 aa).

Gln-235 carries the N5-methylglutamine modification.

This sequence belongs to the prokaryotic/mitochondrial release factor family. Post-translationally, methylated by PrmC. Methylation increases the termination efficiency of RF1.

Its subcellular location is the cytoplasm. Peptide chain release factor 1 directs the termination of translation in response to the peptide chain termination codons UAG and UAA. This chain is Peptide chain release factor 1, found in Buchnera aphidicola subsp. Baizongia pistaciae (strain Bp).